The chain runs to 285 residues: MKVFILALLALTATTAIAQLETTCSQGFGQSQQQQQPGQRQLLEQMKPCVAFLQQKCSPLRMPFLQTQVEQLSSCQIVQYQCCQQLAQIPERTRCHAIHIVVEAIIQQQSQQQWQEPQQQAQHKSMRMLLENLSLMCNIYVPVQCQQQQQMGQQPQQQQLQEQLTPCATFLQHQCSPVTVPFPQIPVDQPTSCQNVQHQCCRQLSQIPEQFRCQAIHNVAEAIRQQQPQQQWQGMYQPQQPAQHESIRMSLQALRSMCNIYIPVQCPAPTAYNIPMVATCTSGAC.

Residues 1–18 (MKVFILALLALTATTAIA) form the signal peptide.

It belongs to the prolamin family. Contains disulfide bonds.

Seed storage protein. Might be integrated via inter-chain disulfide bonds within the glutenin polymer. This chain is Avenin-like b2, found in Triticum aestivum (Wheat).